A 478-amino-acid polypeptide reads, in one-letter code: Quinoprotein glucose dehydrogenase B (478 aa).

Positions 1–24 (MNKHLLAKIALLSAVQLVTLSAFA) are cleaved as a signal peptide. Residues Gln-100 and Asp-167 each contribute to the D-glucose site. His-168 serves as the catalytic Proton acceptor. Residues Gln-192 and Arg-252 each coordinate D-glucose. A PQQ region spans residues 252-253 (RN). Residues Gly-271, Pro-272, Glu-277, Tyr-287, Ala-293, Tyr-295, Asp-297, and Glu-333 each contribute to the Ca(2+) site. Pyrroloquinoline quinone is bound by residues Tyr-367, Thr-372, and Lys-401. The interval 430 to 432 (RYR) is PQQ.

Belongs to the PQQ oxidoreductase GdhB family. As to quaternary structure, homodimer. Pyrroloquinoline quinone serves as cofactor. Requires Ca(2+) as cofactor.

The enzyme catalyses a ubiquinone + D-glucose = D-glucono-1,5-lactone + a ubiquinol. Its function is as follows. Oxidizes glucose to gluconolactone. The chain is Quinoprotein glucose dehydrogenase B (gdhB) from Acinetobacter calcoaceticus.